A 558-amino-acid polypeptide reads, in one-letter code: Armadillo repeat-containing X-linked protein 5 (558 aa).

Composition is skewed to basic and acidic residues over residues 1 to 14 and 139 to 156; these read MVDSGTEARARGKA and KSHDKANTGSRPDRREET. Disordered stretches follow at residues 1–35 and 139–165; these read MVDSGTEARARGKAEAGLQDGISGPATARVNGKTQ and KSHDKANTGSRPDRREETSIGMKSSDE. The ARM 1 repeat unit spans residues 300–339; sequence CKSRGFSLEPKEFDKLVALLKLTKDPFIHEIATMIMGISP. A disordered region spans residues 369–388; sequence HPGALSMVDDSSESSEEPKS. 3 ARM repeats span residues 422–461, 463–503, and 520–558; these read IKFEDHYVITSYIPDFLTLLNKGSVKTKFYVLKVFSCLSK, HANT…NINF, and SELISIFQEAKQFGQKLQDLAEHSDPEVRDKVIRLILKL.

It belongs to the eutherian X-chromosome-specific Armcx family.

The protein is Armadillo repeat-containing X-linked protein 5 (ARMCX5) of Homo sapiens (Human).